The chain runs to 343 residues: Cilia- and flagella-associated protein 36 (343 aa).

Ser85 and Ser147 each carry phosphoserine. A coiled-coil region spans residues 147–187 (SDLEQEEMKILREVLRKSKEEYDQEEERKRKKQSSEAKMEE). A disordered region spans residues 165-188 (KEEYDQEEERKRKKQSSEAKMEEL). At Ser201 the chain carries Phosphoserine. Composition is skewed to basic and acidic residues over residues 279-293 (QKRD…DTRT) and 301-323 (QKGK…AEEK). Residues 279–323 (QKRDKLLSMRKDTRTKQIQNTEQKGKPTREAEEMTEKPEMTAEEK) are disordered.

This sequence belongs to the CFAP36 family. As to quaternary structure, interacts with ARL3.

The protein resides in the nucleus. The protein localises to the cytoplasm. It is found in the cell projection. Its subcellular location is the cilium. It localises to the flagellum. Functionally, may act as an effector for ARL3. This is Cilia- and flagella-associated protein 36 from Mus musculus (Mouse).